The primary structure comprises 291 residues: Beta-lactamase CTX-M-25 (291 aa).

Positions 1-30 (MMRKSVRRAMLMTTACVSLLLASVPLCAQA) are cleaved as a signal peptide. S73 (nucleophile; acyl-ester intermediate) is an active-site residue. 4 residues coordinate a beta-lactam: K76, S133, E169, and S240.

It belongs to the class-A beta-lactamase family. As to quaternary structure, monomer.

The protein localises to the secreted. It carries out the reaction a beta-lactam + H2O = a substituted beta-amino acid. Its activity is regulated as follows. Inhibited by the beta-lactamase-blocking agents clavulanic acid and tazobactam; in the DH10B strain. In terms of biological role, extended-spectrum beta-lactamase (ESBL) which confers resistance to penicillins, as well as first, second and third-generation cephalosporins. Has cefotaxime-hydrolyzing activity. Inactive against cephalosporin antibiotic, cefoxitin, and the carbapenem, imipenem. This Escherichia coli protein is Beta-lactamase CTX-M-25.